Consider the following 457-residue polypeptide: Phenylalanine-4-hydroxylase (457 aa).

In terms of domain architecture, ACT spans 31 to 108; it reads TIVFTLREKA…EKKVLVQDWN (78 aa). Residues His-285, His-290, and Glu-330 each contribute to the Fe cation site.

It belongs to the biopterin-dependent aromatic amino acid hydroxylase family. Homotetramer. It depends on Fe(2+) as a cofactor. Expressed in the seam cells of the lateral hypodermis, in the ventral hypodermis and in the hyp7 hypodermal syncytium, in hypodermal cells in the tail and in body wall muscle cells (at protein level).

It localises to the cytoplasm. The catalysed reaction is (6R)-L-erythro-5,6,7,8-tetrahydrobiopterin + L-phenylalanine + O2 = (4aS,6R)-4a-hydroxy-L-erythro-5,6,7,8-tetrahydrobiopterin + L-tyrosine. It catalyses the reaction (6R)-L-erythro-5,6,7,8-tetrahydrobiopterin + L-tryptophan + O2 = 5-hydroxy-L-tryptophan + (4aS,6R)-4a-hydroxy-L-erythro-5,6,7,8-tetrahydrobiopterin. Its pathway is amino-acid degradation; L-phenylalanine degradation; acetoacetate and fumarate from L-phenylalanine: step 1/6. Its activity is regulated as follows. Inhibited by tetrahydrobiopterin. Unlike its mammalian orthologs, pah-1 does not exhibit allosteric binding behavior for phenylalanine. Catalyzes the hydroxylation of L-phenylalanine to L-tyrosine. Catalyzes the hydroxylation of tryptophan to 5-hydroxy-L-tryptophan. Plays a role in the biosynthesis of a melanin-like cuticle pigment. The protein is Phenylalanine-4-hydroxylase of Caenorhabditis elegans.